The primary structure comprises 147 residues: 3-hydroxyacyl-[acyl-carrier-protein] dehydratase FabZ (147 aa).

His-51 is an active-site residue.

Belongs to the thioester dehydratase family. FabZ subfamily.

It is found in the cytoplasm. The enzyme catalyses a (3R)-hydroxyacyl-[ACP] = a (2E)-enoyl-[ACP] + H2O. Involved in unsaturated fatty acids biosynthesis. Catalyzes the dehydration of short chain beta-hydroxyacyl-ACPs and long chain saturated and unsaturated beta-hydroxyacyl-ACPs. In Anaplasma marginale (strain Florida), this protein is 3-hydroxyacyl-[acyl-carrier-protein] dehydratase FabZ.